The following is an 89-amino-acid chain: MKLNVCFRICNFLFQFSLEFFSISSLHSISSLHSISLSLSLFFLVAILYNIYIYLFRSKKKPKRILFAIPPLCPLCSPCFFFGTSSMLL.

Helical transmembrane passes span 9-29 (ICNFLFQFSLEFFSISSLHSI), 35-55 (ISLSLSLFFLVAILYNIYIYL), and 65-85 (ILFAIPPLCPLCSPCFFFGTS).

The protein resides in the membrane. This is an uncharacterized protein from Schizosaccharomyces pombe (strain 972 / ATCC 24843) (Fission yeast).